Reading from the N-terminus, the 148-residue chain is Single-stranded DNA-binding protein, mitochondrial (148 aa).

Residues Met-1–His-16 constitute a mitochondrion transit peptide. The 112-residue stretch at Leu-30–Ser-141 folds into the SSB domain. A phosphoserine mark is found at Ser-67 and Ser-79. An N6-acetyllysine modification is found at Lys-113. Lys-122 carries the post-translational modification N6-succinyllysine.

As to quaternary structure, homotetramer. Interacts with MPG/AAG, through inhibition of its glycosylase activity it potentially prevents formation of DNA breaks in ssDNA, ensuring that base removal primarily occurs in dsDNA. Interacts with POLDIP2. Interacts with PRIMPOL.

Its subcellular location is the mitochondrion. It localises to the mitochondrion matrix. The protein localises to the mitochondrion nucleoid. Binds preferentially and cooperatively to pyrimidine rich single-stranded DNA (ss-DNA). In vitro, required to maintain the copy number of mitochondrial DNA (mtDNA) and plays a crucial role during mtDNA replication by stimulating the activity of the replisome components POLG and TWNK at the replication fork. Promotes the activity of the gamma complex polymerase POLG, largely by organizing the template DNA and eliminating secondary structures to favor ss-DNA conformations that facilitate POLG activity. In addition it is able to promote the 5'-3' unwinding activity of the mtDNA helicase TWNK. May also function in mtDNA repair. This chain is Single-stranded DNA-binding protein, mitochondrial (SSBP1), found in Pongo abelii (Sumatran orangutan).